We begin with the raw amino-acid sequence, 140 residues long: L-fucose mutarotase (140 aa).

Residue H22 is the Proton donor of the active site. Substrate is bound by residues D30, R107, and 129–131; that span reads YGN.

This sequence belongs to the RbsD / FucU family. FucU mutarotase subfamily. Homodecamer.

The protein resides in the cytoplasm. The catalysed reaction is alpha-L-fucose = beta-L-fucose. Its pathway is carbohydrate metabolism; L-fucose metabolism. Involved in the anomeric conversion of L-fucose. The protein is L-fucose mutarotase of Salmonella arizonae (strain ATCC BAA-731 / CDC346-86 / RSK2980).